The primary structure comprises 189 residues: Large ribosomal subunit protein uL6 (189 aa).

It belongs to the universal ribosomal protein uL6 family. As to quaternary structure, part of the 50S ribosomal subunit.

This protein binds to the 23S rRNA, and is important in its secondary structure. It is located near the subunit interface in the base of the L7/L12 stalk, and near the tRNA binding site of the peptidyltransferase center. In Bacteroides fragilis (strain ATCC 25285 / DSM 2151 / CCUG 4856 / JCM 11019 / LMG 10263 / NCTC 9343 / Onslow / VPI 2553 / EN-2), this protein is Large ribosomal subunit protein uL6.